The chain runs to 432 residues: Phosphomethylpyrimidine synthase (432 aa).

Substrate is bound by residues N66, M95, Y124, H163, 185–187 (SRG), 226–229 (DGLR), and E265. Zn(2+) is bound at residue H269. Residue Y292 participates in substrate binding. H333 serves as a coordination point for Zn(2+). [4Fe-4S] cluster contacts are provided by C409, C412, and C416.

The protein belongs to the ThiC family. [4Fe-4S] cluster is required as a cofactor.

The enzyme catalyses 5-amino-1-(5-phospho-beta-D-ribosyl)imidazole + S-adenosyl-L-methionine = 4-amino-2-methyl-5-(phosphooxymethyl)pyrimidine + CO + 5'-deoxyadenosine + formate + L-methionine + 3 H(+). Its pathway is cofactor biosynthesis; thiamine diphosphate biosynthesis. In terms of biological role, catalyzes the synthesis of the hydroxymethylpyrimidine phosphate (HMP-P) moiety of thiamine from aminoimidazole ribotide (AIR) in a radical S-adenosyl-L-methionine (SAM)-dependent reaction. This is Phosphomethylpyrimidine synthase from Moorella thermoacetica (strain ATCC 39073 / JCM 9320).